The primary structure comprises 770 residues: Arf-GAP with coiled-coil, ANK repeat and PH domain-containing protein 2 (770 aa).

Residues 1–226 (MKMTVDFEEC…MKDLGAQLDR (226 aa)) enclose the BAR domain. One can recognise a PH domain in the interval 266 to 361 (GIVMEGYLFK…WIKAVQTSIA (96 aa)). Residues 371 to 391 (SEKLDKKSSPSTGSLDSGNES) form a disordered region. Positions 379-388 (SPSTGSLDSG) are enriched in polar residues. A phosphoserine mark is found at Ser384 and Ser387. An Arf-GAP domain is found at 399 to 520 (ESALQRVQCI…KFVDKYSALL (122 aa)). A C4-type zinc finger spans residues 414–437 (CCDCGLADPRWASINLGITLCIEC). Ser521 bears the Phosphoserine mark. Positions 542–572 (ARASVHTPVKSNDSGIQQCSEDGRESLPSTV) are disordered. Polar residues predominate over residues 550–561 (VKSNDSGIQQCS). Residues Ser573 and Ser576 each carry the phosphoserine modification. ANK repeat units lie at residues 632 to 661 (NQAT…NVNQ), 665 to 694 (QGRG…NQHA), and 698 to 727 (EGKD…NEEM). Residue Tyr734 is modified to Phosphotyrosine. Ser767 carries the post-translational modification Phosphoserine.

Interacts with RAB35 (GTP-bound form); the interaction is direct and probably recruits ACAP2 to membranes. Interacts with MICALL1; the interaction is indirect through RAB35.

It is found in the endosome membrane. The protein localises to the cell membrane. GAP activity stimulated by phosphatidylinositol 4,5-bisphosphate (PIP2) and phosphatidic acid. Functionally, GTPase-activating protein (GAP) for ADP ribosylation factor 6 (ARF6). Doesn't show GAP activity for RAB35. This Mus musculus (Mouse) protein is Arf-GAP with coiled-coil, ANK repeat and PH domain-containing protein 2 (Acap2).